We begin with the raw amino-acid sequence, 116 residues long: Large ribosomal subunit protein uL18 (116 aa).

The protein belongs to the universal ribosomal protein uL18 family. Part of the 50S ribosomal subunit; part of the 5S rRNA/L5/L18/L25 subcomplex. Contacts the 5S and 23S rRNAs.

This is one of the proteins that bind and probably mediate the attachment of the 5S RNA into the large ribosomal subunit, where it forms part of the central protuberance. The protein is Large ribosomal subunit protein uL18 of Mycoplasma mycoides subsp. mycoides SC (strain CCUG 32753 / NCTC 10114 / PG1).